A 572-amino-acid polypeptide reads, in one-letter code: Oxygen-dependent choline dehydrogenase (572 aa).

9–38 serves as a coordination point for FAD; it reads DYVIIGGGSAGSVLGARLSEDKDKNVLVLE. Residue His-477 is the Proton acceptor of the active site.

Belongs to the GMC oxidoreductase family. It depends on FAD as a cofactor.

The enzyme catalyses choline + A = betaine aldehyde + AH2. It carries out the reaction betaine aldehyde + NAD(+) + H2O = glycine betaine + NADH + 2 H(+). It participates in amine and polyamine biosynthesis; betaine biosynthesis via choline pathway; betaine aldehyde from choline (cytochrome c reductase route): step 1/1. Functionally, involved in the biosynthesis of the osmoprotectant glycine betaine. Catalyzes the oxidation of choline to betaine aldehyde and betaine aldehyde to glycine betaine at the same rate. This Staphylococcus epidermidis (strain ATCC 35984 / DSM 28319 / BCRC 17069 / CCUG 31568 / BM 3577 / RP62A) protein is Oxygen-dependent choline dehydrogenase.